We begin with the raw amino-acid sequence, 395 residues long: Enoyl-[acyl-carrier-protein] reductase [NADH] (395 aa).

Residues 48–53 (GASTGY), 74–75 (FE), 111–112 (DA), and 139–140 (LA) each bind NAD(+). Residue Y225 coordinates substrate. Y235 acts as the Proton donor in catalysis. NAD(+)-binding positions include K244 and 273–275 (LVT).

Belongs to the TER reductase family. As to quaternary structure, monomer.

The catalysed reaction is a 2,3-saturated acyl-[ACP] + NAD(+) = a (2E)-enoyl-[ACP] + NADH + H(+). It functions in the pathway lipid metabolism; fatty acid biosynthesis. Its function is as follows. Involved in the final reduction of the elongation cycle of fatty acid synthesis (FAS II). Catalyzes the reduction of a carbon-carbon double bond in an enoyl moiety that is covalently linked to an acyl carrier protein (ACP). This chain is Enoyl-[acyl-carrier-protein] reductase [NADH], found in Saccharophagus degradans (strain 2-40 / ATCC 43961 / DSM 17024).